A 547-amino-acid chain; its full sequence is Rho GTPase-activating protein 36 (547 aa).

A signal peptide spans M1–G40. The region spanning M226–F426 is the Rho-GAP domain. Positions F493–P547 are disordered. The segment covering E524 to A538 has biased composition (basic and acidic residues).

Its function is as follows. GTPase activator for the Rho-type GTPases by converting them to an inactive GDP-bound state. The sequence is that of Rho GTPase-activating protein 36 (ARHGAP36) from Ailuropoda melanoleuca (Giant panda).